Consider the following 289-residue polypeptide: Protease HtpX homolog (289 aa).

Transmembrane regions (helical) follow at residues leucine 5–isoleucine 27 and alanine 40–asparagine 60. Histidine 133 lines the Zn(2+) pocket. Residue glutamate 134 is part of the active site. Zn(2+) is bound at residue histidine 137. 2 helical membrane passes run threonine 143–alanine 163 and isoleucine 181–alanine 201. Glutamate 207 is a Zn(2+) binding site.

This sequence belongs to the peptidase M48B family. Requires Zn(2+) as cofactor.

Its subcellular location is the cell membrane. The protein is Protease HtpX homolog of Pyrococcus furiosus (strain ATCC 43587 / DSM 3638 / JCM 8422 / Vc1).